The following is a 105-amino-acid chain: Large ribosomal subunit protein uL24 (105 aa).

It belongs to the universal ribosomal protein uL24 family. As to quaternary structure, part of the 50S ribosomal subunit.

One of two assembly initiator proteins, it binds directly to the 5'-end of the 23S rRNA, where it nucleates assembly of the 50S subunit. In terms of biological role, one of the proteins that surrounds the polypeptide exit tunnel on the outside of the subunit. The sequence is that of Large ribosomal subunit protein uL24 from Xanthobacter autotrophicus (strain ATCC BAA-1158 / Py2).